A 153-amino-acid chain; its full sequence is Endoribonuclease YbeY (153 aa).

Residues H114, H118, and H124 each coordinate Zn(2+).

The protein belongs to the endoribonuclease YbeY family. Zn(2+) serves as cofactor.

Its subcellular location is the cytoplasm. In terms of biological role, single strand-specific metallo-endoribonuclease involved in late-stage 70S ribosome quality control and in maturation of the 3' terminus of the 16S rRNA. The sequence is that of Endoribonuclease YbeY from Finegoldia magna (strain ATCC 29328 / DSM 20472 / WAL 2508) (Peptostreptococcus magnus).